The primary structure comprises 146 residues: Protein archease (146 aa).

Ca(2+)-binding residues include D16, D145, and I146.

The protein belongs to the archease family.

Activates the tRNA-splicing ligase complex by facilitating the enzymatic turnover of catalytic subunit RtcB. Acts by promoting the guanylylation of RtcB, a key intermediate step in tRNA ligation. Can also alter the NTP specificity of RtcB such that ATP, dGTP or ITP is used efficiently. The protein is Protein archease of Methanosarcina mazei (strain ATCC BAA-159 / DSM 3647 / Goe1 / Go1 / JCM 11833 / OCM 88) (Methanosarcina frisia).